The chain runs to 377 residues: All-trans-retinol dehydrogenase [NAD(+)] ADH4 (377 aa).

Cysteine 47 contributes to the Zn(2+) binding site. 48–49 provides a ligand contact to NAD(+); the sequence is PT. 6 residues coordinate Zn(2+): histidine 68, cysteine 98, cysteine 101, cysteine 104, cysteine 112, and cysteine 179. NAD(+) is bound by residues 204–209, aspartate 228, lysine 233, 297–299, 320–322, and arginine 372; these read GLGCVG, VGA, and TFF.

Belongs to the zinc-containing alcohol dehydrogenase family. Class-II subfamily. In terms of assembly, dimer. The cofactor is Zn(2+). In terms of tissue distribution, liver specific.

It is found in the cytoplasm. It carries out the reaction all-trans-retinol + NAD(+) = all-trans-retinal + NADH + H(+). The enzyme catalyses 9-cis-retinol + NAD(+) = 9-cis-retinal + NADH + H(+). The catalysed reaction is 20-oxo-(5Z,8Z,11Z,14Z)-eicosatetraenoate + NAD(+) + H2O = (5Z,8Z,11Z,14Z)-eicosatetraenedioate + NADH + 2 H(+). It catalyses the reaction 20-hydroxy-(5Z,8Z,11Z,14Z)-eicosatetraenoate + NAD(+) = 20-oxo-(5Z,8Z,11Z,14Z)-eicosatetraenoate + NADH + H(+). It carries out the reaction 1,4-benzoquinone + NADH + H(+) = hydroquinone + NAD(+). With respect to regulation, oxidation of 20-HETE is inhibited by low concentrations of N-heptylformamide. Oxidation of 20-HETE is a decreased by 55-65% by either all-trans-retinol or all-trans-retinoic acid. Strongly inhibited by omega-hydroxy fatty acids. Its function is as follows. Catalyzes the NAD-dependent oxidation of either all-trans-retinol or 9-cis-retinol. Also oxidizes long chain omega-hydroxy fatty acids, such as 20-HETE, producing both the intermediate aldehyde, 20-oxoarachidonate and the end product, a dicarboxylic acid, (5Z,8Z,11Z,14Z)-eicosatetraenedioate. Also catalyzes the reduction of benzoquinones. In Rattus norvegicus (Rat), this protein is All-trans-retinol dehydrogenase [NAD(+)] ADH4.